The primary structure comprises 309 residues: Taste receptor type 2 member 20 (309 aa).

Topologically, residues 1 to 6 are extracellular; sequence MMSFLH. The helical transmembrane segment at 7–27 threads the bilayer; that stretch reads IVFSILVVVAFILGNFANGFI. The Cytoplasmic portion of the chain corresponds to 28-46; sequence ALINFIAWVKRQKISSADQ. The chain crosses the membrane as a helical span at residues 47–67; the sequence is IIAALAVSRVGLLWVILLHWY. The Extracellular segment spans residues 68–79; that stretch reads STVLNPTSSNLK. A helical transmembrane segment spans residues 80–100; the sequence is VIIFISNAWAVTNHFSIWLAT. Residues 101-125 lie on the Cytoplasmic side of the membrane; sequence SLSIFYLLKIVNFSRLIFHHLKRKA. Residues 126–146 traverse the membrane as a helical segment; that stretch reads KSVVLVIVLGSLFFLVCXLVM. Topologically, residues 147–178 are extracellular; sequence KNTYINVWTEECEGNVTWKIKLRNAMHLSNLT. The chain crosses the membrane as a helical span at residues 179 to 199; the sequence is VAMLANLIPFTLTLISFLLLI. Over 200–229 the chain is Cytoplasmic; that stretch reads YSLCKHLKKMQLHGKGSQDPSTKIHIKALQ. The chain crosses the membrane as a helical span at residues 230–250; sequence TVTSFLILLAIYFLCLITSFW. At 251–259 the chain is on the extracellular side; it reads NSKMRPKEI. The chain crosses the membrane as a helical span at residues 260–280; the sequence is VLMLCQAFGIIYPSFHSFILI. At 281-309 the chain is on the cytoplasmic side; the sequence is WGNKTLKQTFLSVLWQVTCWAKGQNQSTP.

Belongs to the G-protein coupled receptor T2R family.

It is found in the membrane. In terms of biological role, receptor that may play a role in the perception of bitterness and is gustducin-linked. May play a role in sensing the chemical composition of the gastrointestinal content. The activity of this receptor may stimulate alpha gustducin, mediate PLC-beta-2 activation and lead to the gating of TRPM5. The protein is Taste receptor type 2 member 20 (TAS2R20) of Pan troglodytes (Chimpanzee).